The sequence spans 439 residues: 3-phosphoshikimate 1-carboxyvinyltransferase (439 aa).

K25, S26, and R30 together coordinate 3-phosphoshikimate. K25 is a binding site for phosphoenolpyruvate. 2 residues coordinate phosphoenolpyruvate: G96 and R124. Residues S170, S171, Q172, S202, D324, and K351 each coordinate 3-phosphoshikimate. Residue Q172 participates in phosphoenolpyruvate binding. Residue D324 is the Proton acceptor of the active site. Phosphoenolpyruvate-binding residues include R355, R399, and K424.

Belongs to the EPSP synthase family. Monomer.

It localises to the cytoplasm. It carries out the reaction 3-phosphoshikimate + phosphoenolpyruvate = 5-O-(1-carboxyvinyl)-3-phosphoshikimate + phosphate. The protein operates within metabolic intermediate biosynthesis; chorismate biosynthesis; chorismate from D-erythrose 4-phosphate and phosphoenolpyruvate: step 6/7. Catalyzes the transfer of the enolpyruvyl moiety of phosphoenolpyruvate (PEP) to the 5-hydroxyl of shikimate-3-phosphate (S3P) to produce enolpyruvyl shikimate-3-phosphate and inorganic phosphate. This Bordetella avium (strain 197N) protein is 3-phosphoshikimate 1-carboxyvinyltransferase.